The sequence spans 386 residues: Na(+)/H(+) antiporter NhaA (386 aa).

The next 11 membrane-spanning stretches (helical) occupy residues 11-31 (NDAT…FLAN), 60-80 (LLLW…GLEV), 96-116 (MFPL…YAAF), 126-146 (GWAI…ALLG), 155-175 (MFLM…IALF), 180-200 (LSLI…VLNG), 218-238 (VAVL…GLFI), 260-280 (VSWL…LSGV), 293-313 (ITLG…WLAV), 326-346 (LIDI…SIFI), and 358-378 (LVTL…LVGY).

The protein belongs to the NhaA Na(+)/H(+) (TC 2.A.33) antiporter family.

It is found in the cell inner membrane. It carries out the reaction Na(+)(in) + 2 H(+)(out) = Na(+)(out) + 2 H(+)(in). Na(+)/H(+) antiporter that extrudes sodium in exchange for external protons. The sequence is that of Na(+)/H(+) antiporter NhaA from Erwinia tasmaniensis (strain DSM 17950 / CFBP 7177 / CIP 109463 / NCPPB 4357 / Et1/99).